A 380-amino-acid chain; its full sequence is Kappa-type opioid receptor (380 aa).

The Extracellular segment spans residues 1–57 (MEPPVQIFRGEPGPTCSPSTCLPPNGSGWFPGWAEPDGNGSAGSEDVLLEPAHISPV). 2 N-linked (GlcNAc...) asparagine glycosylation sites follow: Asn25 and Asn39. The chain crosses the membrane as a helical span at residues 58-85 (ILVIITAVYSVVFVVGLVGNSLVMFVII). Residues 86–95 (RYTKMKTATN) are Cytoplasmic-facing. Residues 96–119 (IYIFNLALADALVTTTMPFQSTVY) form a helical membrane-spanning segment. At 120-132 (LMNSWPFGDVLCK) the chain is on the extracellular side. The cysteines at positions 131 and 210 are disulfide-linked. The chain crosses the membrane as a helical span at residues 133 to 154 (VVISIDYYNMFTSIFTLTMMSV). The Cytoplasmic segment spans residues 155–173 (DRYIAVCHPVKALDFRTPL). The helical transmembrane segment at 174–196 (KAKIINICIWILSSSVGISAIVL) threads the bilayer. Over 197–222 (GGTKVREDMEVIECSLQFPDDDYSWW) the chain is Extracellular. The helical transmembrane segment at 223-247 (DLFMKVCVFVFAFVIPVLIIIVCYT) threads the bilayer. Residues 248 to 274 (LMILRLKSVRLLSGSREKDRNLRRITR) are Cytoplasmic-facing. Residues 275-296 (LVLVVVAVFVVCWTPIHIFILV) form a helical membrane-spanning segment. The Extracellular segment spans residues 297–311 (EALGSTAHSTAALSS). A helical transmembrane segment spans residues 312–333 (YYFCIALGYTNSSLNPILYAFL). Residues 334–380 (DENFKRCFRDFCFPIKMRMERQSTSRVRNTVQDPAYVREVDGVNKPV) lie on the Cytoplasmic side of the membrane. Cys345 carries S-palmitoyl cysteine lipidation.

This sequence belongs to the G-protein coupled receptor 1 family. Interacts with NHERF1. Interacts with GABARAPL1.

The protein localises to the cell membrane. Its function is as follows. G-protein coupled opioid receptor that functions as a receptor for endogenous alpha-neoendorphins and dynorphins, but has low affinity for beta-endorphins. Also functions as a receptor for various synthetic opioids and for the psychoactive diterpene salvinorin A. Ligand binding causes a conformation change that triggers signaling via guanine nucleotide-binding proteins (G proteins) and modulates the activity of down-stream effectors, such as adenylate cyclase. Signaling leads to the inhibition of adenylate cyclase activity. Inhibits neurotransmitter release by reducing calcium ion currents and increasing potassium ion conductance. Plays a role in the perception of pain. Plays a role in mediating reduced physical activity upon treatment with synthetic opioids. Plays a role in the regulation of salivation in response to synthetic opioids. May play a role in arousal and regulation of autonomic and neuroendocrine functions. The chain is Kappa-type opioid receptor (OPRK1) from Bos taurus (Bovine).